Here is a 253-residue protein sequence, read N- to C-terminus: Tryptophan synthase alpha chain (253 aa).

Catalysis depends on proton acceptor residues glutamate 47 and aspartate 58.

Belongs to the TrpA family. Tetramer of two alpha and two beta chains.

The enzyme catalyses (1S,2R)-1-C-(indol-3-yl)glycerol 3-phosphate + L-serine = D-glyceraldehyde 3-phosphate + L-tryptophan + H2O. It participates in amino-acid biosynthesis; L-tryptophan biosynthesis; L-tryptophan from chorismate: step 5/5. In terms of biological role, the alpha subunit is responsible for the aldol cleavage of indoleglycerol phosphate to indole and glyceraldehyde 3-phosphate. This Lactococcus lactis subsp. cremoris (strain MG1363) protein is Tryptophan synthase alpha chain.